The sequence spans 90 residues: Defensin-like protein 178 (90 aa).

The signal sequence occupies residues 1-23 (MAKATSSLVVPIIFLVIFALVEQ). 4 cysteine pairs are disulfide-bonded: C27/C66, C36/C55, C39/C60, and C43/C62.

This sequence belongs to the DEFL family.

The protein localises to the secreted. The polypeptide is Defensin-like protein 178 (LCR64) (Arabidopsis thaliana (Mouse-ear cress)).